The chain runs to 95 residues: Aspartyl/glutamyl-tRNA(Asn/Gln) amidotransferase subunit C (95 aa).

This sequence belongs to the GatC family. In terms of assembly, heterotrimer of A, B and C subunits.

The enzyme catalyses L-glutamyl-tRNA(Gln) + L-glutamine + ATP + H2O = L-glutaminyl-tRNA(Gln) + L-glutamate + ADP + phosphate + H(+). The catalysed reaction is L-aspartyl-tRNA(Asn) + L-glutamine + ATP + H2O = L-asparaginyl-tRNA(Asn) + L-glutamate + ADP + phosphate + 2 H(+). Allows the formation of correctly charged Asn-tRNA(Asn) or Gln-tRNA(Gln) through the transamidation of misacylated Asp-tRNA(Asn) or Glu-tRNA(Gln) in organisms which lack either or both of asparaginyl-tRNA or glutaminyl-tRNA synthetases. The reaction takes place in the presence of glutamine and ATP through an activated phospho-Asp-tRNA(Asn) or phospho-Glu-tRNA(Gln). This chain is Aspartyl/glutamyl-tRNA(Asn/Gln) amidotransferase subunit C, found in Phenylobacterium zucineum (strain HLK1).